Consider the following 828-residue polypeptide: Glycerol-3-phosphate acyltransferase (828 aa).

Positions 304–309 (CHRSHM) match the HXXXXD motif motif. The interval 802 to 828 (SMPAETSNQPEAPETPETPEPEGKTES) is disordered.

It belongs to the GPAT/DAPAT family.

The protein resides in the cell inner membrane. The enzyme catalyses sn-glycerol 3-phosphate + an acyl-CoA = a 1-acyl-sn-glycero-3-phosphate + CoA. Its pathway is phospholipid metabolism; CDP-diacylglycerol biosynthesis; CDP-diacylglycerol from sn-glycerol 3-phosphate: step 1/3. The chain is Glycerol-3-phosphate acyltransferase from Yersinia pseudotuberculosis serotype O:3 (strain YPIII).